The following is a 415-amino-acid chain: Tyrosine--tRNA ligase (415 aa).

A 'HIGH' region motif is present at residues 54–63 (PTGSNIHLGH). The 'KMSKS' region signature appears at 248 to 252 (KMSKS). K251 contributes to the ATP binding site. The S4 RNA-binding domain maps to 351 to 415 (AKAFYLLSAV…GKKTFRRLTA (65 aa)).

Belongs to the class-I aminoacyl-tRNA synthetase family. TyrS type 2 subfamily. As to quaternary structure, homodimer.

It localises to the cytoplasm. It carries out the reaction tRNA(Tyr) + L-tyrosine + ATP = L-tyrosyl-tRNA(Tyr) + AMP + diphosphate + H(+). Catalyzes the attachment of tyrosine to tRNA(Tyr) in a two-step reaction: tyrosine is first activated by ATP to form Tyr-AMP and then transferred to the acceptor end of tRNA(Tyr). In Parasynechococcus marenigrum (strain WH8102), this protein is Tyrosine--tRNA ligase.